Consider the following 574-residue polypeptide: Iron hydrogenase 1 (574 aa).

One can recognise a 2Fe-2S ferredoxin-type domain in the interval 1–78 (MKTIIINGVQ…GMIINTNSDA (78 aa)). Residues cysteine 34, cysteine 46, cysteine 49, and cysteine 62 each coordinate [2Fe-2S] cluster. The 40-residue stretch at 78–117 (AVNEKIKSRISQLLDIHEFKCGPCNRRENCEFLKLVIKYK) folds into the 4Fe-4S His(Cys)3-ligated-type domain. 16 residues coordinate [4Fe-4S] cluster: histidine 94, cysteine 98, cysteine 101, cysteine 107, cysteine 147, cysteine 150, cysteine 153, cysteine 157, cysteine 190, cysteine 193, cysteine 196, cysteine 200, cysteine 300, cysteine 355, cysteine 499, and cysteine 503. 2 4Fe-4S ferredoxin-type domains span residues 138 to 167 (KSLTVDRTKCLLCGRCVNACGKNTETYAMK) and 181 to 210 (DEKCFDDTNCLLCGQCIIACPVAALSEKSH). Cysteine 503 is a binding site for Fe(2+).

In terms of assembly, monomer. The cofactor is [2Fe-2S] cluster. [4Fe-4S] cluster serves as cofactor. Fe(2+) is required as a cofactor.

It catalyses the reaction H2 + 2 oxidized [2Fe-2S]-[ferredoxin] = 2 reduced [2Fe-2S]-[ferredoxin] + 2 H(+). This chain is Iron hydrogenase 1, found in Clostridium pasteurianum.